The following is a 355-amino-acid chain: GTPase Obg (355 aa).

One can recognise an Obg domain in the interval 1–159 (MKFLDEAKVY…KTIWLRLKLI (159 aa)). In terms of domain architecture, OBG-type G spans 160–327 (ADAGLVGLPN…ALRALRDIIV (168 aa)). Residues 166 to 173 (GLPNAGKS), 191 to 195 (FTTLH), 212 to 215 (DIPG), 279 to 282 (SQID), and 308 to 310 (SAA) contribute to the GTP site. Ser173 and Thr193 together coordinate Mg(2+). The tract at residues 333–355 (GDTALPDRSMPHESEVEEEDDRL) is disordered.

The protein belongs to the TRAFAC class OBG-HflX-like GTPase superfamily. OBG GTPase family. In terms of assembly, monomer. Mg(2+) is required as a cofactor.

Its subcellular location is the cytoplasm. Its function is as follows. An essential GTPase which binds GTP, GDP and possibly (p)ppGpp with moderate affinity, with high nucleotide exchange rates and a fairly low GTP hydrolysis rate. Plays a role in control of the cell cycle, stress response, ribosome biogenesis and in those bacteria that undergo differentiation, in morphogenesis control. The sequence is that of GTPase Obg from Agrobacterium fabrum (strain C58 / ATCC 33970) (Agrobacterium tumefaciens (strain C58)).